Consider the following 178-residue polypeptide: Gamma-crystallin M1 (178 aa).

2 consecutive Beta/gamma crystallin 'Greek key' domains span residues G2–S40 and G41–P86. Residues P87–S91 form a connecting peptide region. 2 consecutive Beta/gamma crystallin 'Greek key' domains span residues Y92 to D132 and G133 to T175.

Belongs to the beta/gamma-crystallin family. As to quaternary structure, monomer.

Its function is as follows. Crystallins are the dominant structural components of the vertebrate eye lens. This Cyprinus carpio (Common carp) protein is Gamma-crystallin M1.